A 337-amino-acid chain; its full sequence is ATP-dependent 6-phosphofructokinase (337 aa).

Position 11 (Gly-11) interacts with ATP. Position 21 to 25 (21 to 25 (RAVVR)) interacts with ADP. Residues 72–73 (RY) and 102–105 (GDGS) each bind ATP. Position 103 (Asp-103) interacts with Mg(2+). Position 125–127 (125–127 (TID)) interacts with substrate. Asp-127 functions as the Proton acceptor in the catalytic mechanism. Residue Arg-154 participates in ADP binding. Residues Arg-162 and 169-171 (MGR) contribute to the substrate site. Residues 185-187 (GAD) and 214-216 (KNH) contribute to the ADP site. Substrate contacts are provided by residues Glu-223, Arg-245, and 251 to 254 (HILR).

Belongs to the phosphofructokinase type A (PFKA) family. ATP-dependent PFK group I subfamily. Prokaryotic clade 'B1' sub-subfamily. In terms of assembly, homotetramer. Requires Mg(2+) as cofactor.

The protein resides in the cytoplasm. It carries out the reaction beta-D-fructose 6-phosphate + ATP = beta-D-fructose 1,6-bisphosphate + ADP + H(+). Its pathway is carbohydrate degradation; glycolysis; D-glyceraldehyde 3-phosphate and glycerone phosphate from D-glucose: step 3/4. Its activity is regulated as follows. Allosterically activated by ADP and other diphosphonucleosides, and allosterically inhibited by phosphoenolpyruvate. Functionally, catalyzes the phosphorylation of D-fructose 6-phosphate to fructose 1,6-bisphosphate by ATP, the first committing step of glycolysis. In Streptococcus mutans serotype c (strain ATCC 700610 / UA159), this protein is ATP-dependent 6-phosphofructokinase.